Reading from the N-terminus, the 127-residue chain is Ribonuclease P protein component (127 aa).

The protein belongs to the RnpA family. Consists of a catalytic RNA component (M1 or rnpB) and a protein subunit.

It catalyses the reaction Endonucleolytic cleavage of RNA, removing 5'-extranucleotides from tRNA precursor.. In terms of biological role, RNaseP catalyzes the removal of the 5'-leader sequence from pre-tRNA to produce the mature 5'-terminus. It can also cleave other RNA substrates such as 4.5S RNA. The protein component plays an auxiliary but essential role in vivo by binding to the 5'-leader sequence and broadening the substrate specificity of the ribozyme. The polypeptide is Ribonuclease P protein component (Corynebacterium urealyticum (strain ATCC 43042 / DSM 7109)).